A 140-amino-acid polypeptide reads, in one-letter code: Nucleoside diphosphate kinase (140 aa).

Residues K11, F59, R87, T93, R104, and N114 each coordinate ATP. The Pros-phosphohistidine intermediate role is filled by H117.

The protein belongs to the NDK family. Homotetramer. It depends on Mg(2+) as a cofactor.

The protein localises to the cytoplasm. The enzyme catalyses a 2'-deoxyribonucleoside 5'-diphosphate + ATP = a 2'-deoxyribonucleoside 5'-triphosphate + ADP. It catalyses the reaction a ribonucleoside 5'-diphosphate + ATP = a ribonucleoside 5'-triphosphate + ADP. Its function is as follows. Major role in the synthesis of nucleoside triphosphates other than ATP. The ATP gamma phosphate is transferred to the NDP beta phosphate via a ping-pong mechanism, using a phosphorylated active-site intermediate. This is Nucleoside diphosphate kinase from Sphingopyxis alaskensis (strain DSM 13593 / LMG 18877 / RB2256) (Sphingomonas alaskensis).